Reading from the N-terminus, the 224-residue chain is Elongation factor Ts (224 aa).

The interval 81–84 (TDFV) is involved in Mg(2+) ion dislocation from EF-Tu.

Belongs to the EF-Ts family.

The protein resides in the cytoplasm. In terms of biological role, associates with the EF-Tu.GDP complex and induces the exchange of GDP to GTP. It remains bound to the aminoacyl-tRNA.EF-Tu.GTP complex up to the GTP hydrolysis stage on the ribosome. This is Elongation factor Ts from Finegoldia magna (strain ATCC 29328 / DSM 20472 / WAL 2508) (Peptostreptococcus magnus).